Here is a 502-residue protein sequence, read N- to C-terminus: Tubulin gamma chain (502 aa).

Positions E51–P68 are enriched in polar residues. Residues E51–R73 are disordered. Residue A169–G175 coordinates GTP. Residues D473–D482 are compositionally biased toward acidic residues. Residues D473–I502 are disordered.

The protein belongs to the tubulin family.

The protein localises to the cytoplasm. Its subcellular location is the cytoskeleton. The protein resides in the microtubule organizing center. It is found in the spindle pole body. Tubulin is the major constituent of microtubules. The gamma chain is found at microtubule organizing centers (MTOC) such as the spindle poles or the centrosome, suggesting that it is involved in the minus-end nucleation of microtubule assembly. The protein is Tubulin gamma chain (TUB4) of Candida albicans (Yeast).